The sequence spans 157 residues: RNA pyrophosphohydrolase (157 aa).

In terms of domain architecture, Nudix hydrolase spans 6 to 149 (SYRPNVAAVI…KRKVYRRVID (144 aa)). The Nudix box motif lies at 43-64 (GGIDEGETPEDALYRELLEEIG).

This sequence belongs to the Nudix hydrolase family. RppH subfamily. Requires a divalent metal cation as cofactor.

Its function is as follows. Accelerates the degradation of transcripts by removing pyrophosphate from the 5'-end of triphosphorylated RNA, leading to a more labile monophosphorylated state that can stimulate subsequent ribonuclease cleavage. This chain is RNA pyrophosphohydrolase, found in Sulfurovum sp. (strain NBC37-1).